We begin with the raw amino-acid sequence, 144 residues long: Granulocyte-macrophage colony-stimulating factor (144 aa).

The first 17 residues, 1 to 17 (MWLQGLLLLGTVACSIS), serve as a signal peptide directing secretion. Residue Ser24 is glycosylated (O-linked (GalNAc...) serine). Residue Thr27 is glycosylated (O-linked (GalNAc...) threonine). 2 N-linked (GlcNAc...) asparagine glycosylation sites follow: Asn44 and Asn54. Cystine bridges form between Cys71/Cys113 and Cys105/Cys138.

It belongs to the GM-CSF family. As to quaternary structure, monomer. The signaling GM-CSF receptor complex is a dodecamer of two head-to-head hexamers of two alpha, two beta, and two ligand subunits.

The protein localises to the secreted. Functionally, cytokine that stimulates the growth and differentiation of hematopoietic precursor cells from various lineages, including granulocytes, macrophages, eosinophils and erythrocytes. The sequence is that of Granulocyte-macrophage colony-stimulating factor (CSF2) from Chlorocebus aethiops (Green monkey).